The sequence spans 377 residues: Erythronate-4-phosphate dehydrogenase (377 aa).

2 residues coordinate substrate: Ser-45 and Thr-67. Residues Asp-147, 210-212 (ASR), and Asp-236 contribute to the NAD(+) site. Arg-212 is a catalytic residue. Glu-241 is a catalytic residue. His-258 acts as the Proton donor in catalysis. Gly-261 contributes to the NAD(+) binding site. Tyr-262 provides a ligand contact to substrate.

It belongs to the D-isomer specific 2-hydroxyacid dehydrogenase family. PdxB subfamily. Homodimer.

It localises to the cytoplasm. It catalyses the reaction 4-phospho-D-erythronate + NAD(+) = (R)-3-hydroxy-2-oxo-4-phosphooxybutanoate + NADH + H(+). Its pathway is cofactor biosynthesis; pyridoxine 5'-phosphate biosynthesis; pyridoxine 5'-phosphate from D-erythrose 4-phosphate: step 2/5. In terms of biological role, catalyzes the oxidation of erythronate-4-phosphate to 3-hydroxy-2-oxo-4-phosphonooxybutanoate. This is Erythronate-4-phosphate dehydrogenase from Aeromonas salmonicida (strain A449).